Consider the following 132-residue polypeptide: Ribosome-binding factor A (132 aa).

Belongs to the RbfA family. Monomer. Binds 30S ribosomal subunits, but not 50S ribosomal subunits or 70S ribosomes.

Its subcellular location is the cytoplasm. In terms of biological role, one of several proteins that assist in the late maturation steps of the functional core of the 30S ribosomal subunit. Associates with free 30S ribosomal subunits (but not with 30S subunits that are part of 70S ribosomes or polysomes). Required for efficient processing of 16S rRNA. May interact with the 5'-terminal helix region of 16S rRNA. This is Ribosome-binding factor A from Rhizorhabdus wittichii (strain DSM 6014 / CCUG 31198 / JCM 15750 / NBRC 105917 / EY 4224 / RW1) (Sphingomonas wittichii).